A 159-amino-acid chain; its full sequence is Protein-export protein SecB (159 aa).

It belongs to the SecB family. In terms of assembly, homotetramer, a dimer of dimers. One homotetramer interacts with 1 SecA dimer.

The protein resides in the cytoplasm. Functionally, one of the proteins required for the normal export of preproteins out of the cell cytoplasm. It is a molecular chaperone that binds to a subset of precursor proteins, maintaining them in a translocation-competent state. It also specifically binds to its receptor SecA. In Burkholderia mallei (strain NCTC 10229), this protein is Protein-export protein SecB.